The chain runs to 132 residues: Small ribosomal subunit protein uS8c (132 aa).

This sequence belongs to the universal ribosomal protein uS8 family. In terms of assembly, part of the 30S ribosomal subunit.

The protein localises to the plastid. The protein resides in the chloroplast. One of the primary rRNA binding proteins, it binds directly to 16S rRNA central domain where it helps coordinate assembly of the platform of the 30S subunit. This is Small ribosomal subunit protein uS8c (rps8) from Guillardia theta (Cryptophyte).